A 351-amino-acid chain; its full sequence is Lipopolysaccharide core biosynthesis mannosyltransferase LpsB (351 aa).

This sequence belongs to the glycosyltransferase group 1 family. Glycosyltransferase 4 subfamily.

Its pathway is bacterial outer membrane biogenesis; LPS core biosynthesis. In terms of biological role, acts at transfer of mannose group to a 3-deoxy-D-mono octulonic acid (KDO) via an alpha-1,5 linkage. This is Lipopolysaccharide core biosynthesis mannosyltransferase LpsB (lpsB) from Rhizobium meliloti (strain 1021) (Ensifer meliloti).